Consider the following 121-residue polypeptide: Ribonuclease P protein component (121 aa).

This sequence belongs to the RnpA family. As to quaternary structure, consists of a catalytic RNA component (M1 or rnpB) and a protein subunit.

It carries out the reaction Endonucleolytic cleavage of RNA, removing 5'-extranucleotides from tRNA precursor.. Its function is as follows. RNaseP catalyzes the removal of the 5'-leader sequence from pre-tRNA to produce the mature 5'-terminus. It can also cleave other RNA substrates such as 4.5S RNA. The protein component plays an auxiliary but essential role in vivo by binding to the 5'-leader sequence and broadening the substrate specificity of the ribozyme. The polypeptide is Ribonuclease P protein component (Chromobacterium violaceum (strain ATCC 12472 / DSM 30191 / JCM 1249 / CCUG 213 / NBRC 12614 / NCIMB 9131 / NCTC 9757 / MK)).